The following is a 357-amino-acid chain: 3-isopropylmalate dehydrogenase (357 aa).

The substrate site is built by arginine 97, arginine 107, arginine 135, and aspartate 224. Positions 224, 248, and 252 each coordinate Mg(2+). Position 282 to 294 (282 to 294) interacts with NAD(+); it reads GSAPDIAGQDKAN.

The protein belongs to the isocitrate and isopropylmalate dehydrogenases family. LeuB type 1 subfamily. As to quaternary structure, homodimer. The cofactor is Mg(2+). Requires Mn(2+) as cofactor.

It localises to the cytoplasm. The enzyme catalyses (2R,3S)-3-isopropylmalate + NAD(+) = 4-methyl-2-oxopentanoate + CO2 + NADH. It participates in amino-acid biosynthesis; L-leucine biosynthesis; L-leucine from 3-methyl-2-oxobutanoate: step 3/4. Functionally, catalyzes the oxidation of 3-carboxy-2-hydroxy-4-methylpentanoate (3-isopropylmalate) to 3-carboxy-4-methyl-2-oxopentanoate. The product decarboxylates to 4-methyl-2 oxopentanoate. This is 3-isopropylmalate dehydrogenase from Parasynechococcus marenigrum (strain WH8102).